The following is a 128-amino-acid chain: Small ribosomal subunit protein uS10 (128 aa).

Belongs to the universal ribosomal protein uS10 family.

This chain is Small ribosomal subunit protein uS10 (RPS20), found in Oryza sativa subsp. japonica (Rice).